Reading from the N-terminus, the 125-residue chain is Large ribosomal subunit protein bL12 (125 aa).

This sequence belongs to the bacterial ribosomal protein bL12 family. In terms of assembly, homodimer. Part of the ribosomal stalk of the 50S ribosomal subunit. Forms a multimeric L10(L12)X complex, where L10 forms an elongated spine to which 2 to 4 L12 dimers bind in a sequential fashion. Binds GTP-bound translation factors.

Its function is as follows. Forms part of the ribosomal stalk which helps the ribosome interact with GTP-bound translation factors. Is thus essential for accurate translation. This is Large ribosomal subunit protein bL12 from Dictyoglomus thermophilum (strain ATCC 35947 / DSM 3960 / H-6-12).